Consider the following 468-residue polypeptide: Siroheme synthase (468 aa).

Residues 1-203 (MQYLPIFLNI…GQEEEAEGAL (203 aa)) are precorrin-2 dehydrogenase /sirohydrochlorin ferrochelatase. NAD(+) contacts are provided by residues 22 to 23 (TV) and 43 to 44 (PK). Serine 128 bears the Phosphoserine mark. Positions 216 to 468 (GEVYLVGAGP…VPDREPLDAR (253 aa)) are uroporphyrinogen-III C-methyltransferase. An S-adenosyl-L-methionine-binding site is contributed by proline 225. Aspartate 248 serves as the catalytic Proton acceptor. Lysine 270 acts as the Proton donor in catalysis. S-adenosyl-L-methionine is bound by residues 301–303 (GGD), isoleucine 306, 331–332 (TA), methionine 383, and glycine 412.

In the N-terminal section; belongs to the precorrin-2 dehydrogenase / sirohydrochlorin ferrochelatase family. It in the C-terminal section; belongs to the precorrin methyltransferase family.

It catalyses the reaction uroporphyrinogen III + 2 S-adenosyl-L-methionine = precorrin-2 + 2 S-adenosyl-L-homocysteine + H(+). The catalysed reaction is precorrin-2 + NAD(+) = sirohydrochlorin + NADH + 2 H(+). It carries out the reaction siroheme + 2 H(+) = sirohydrochlorin + Fe(2+). It participates in cofactor biosynthesis; adenosylcobalamin biosynthesis; precorrin-2 from uroporphyrinogen III: step 1/1. The protein operates within cofactor biosynthesis; adenosylcobalamin biosynthesis; sirohydrochlorin from precorrin-2: step 1/1. Its pathway is porphyrin-containing compound metabolism; siroheme biosynthesis; precorrin-2 from uroporphyrinogen III: step 1/1. It functions in the pathway porphyrin-containing compound metabolism; siroheme biosynthesis; siroheme from sirohydrochlorin: step 1/1. It participates in porphyrin-containing compound metabolism; siroheme biosynthesis; sirohydrochlorin from precorrin-2: step 1/1. Functionally, multifunctional enzyme that catalyzes the SAM-dependent methylations of uroporphyrinogen III at position C-2 and C-7 to form precorrin-2 via precorrin-1. Then it catalyzes the NAD-dependent ring dehydrogenation of precorrin-2 to yield sirohydrochlorin. Finally, it catalyzes the ferrochelation of sirohydrochlorin to yield siroheme. This Nitrosococcus oceani (strain ATCC 19707 / BCRC 17464 / JCM 30415 / NCIMB 11848 / C-107) protein is Siroheme synthase.